The following is a 305-amino-acid chain: Homeobox protein NANOGP8 (305 aa).

Positions Met1 to Gln96 are disordered. Residues Ser65 to Asn82 are compositionally biased toward polar residues. Residues Lys95 to Gln154 constitute a DNA-binding region (homeobox). 8 repeat units span residues Trp196–Thr200, Trp201–Thr205, Trp206–Thr210, Trp216–Ser220, Trp221–Thr225, Trp226–Ser230, Trp231–Ala235, and Trp236–Phe240. The segment at Trp196–Phe240 is 8 X repeats starting with a Trp in each unit. The tract at residues Trp196–Phe240 is sufficient for transactivation activity. Residues Tyr241–Val305 are sufficient for strong transactivation activity.

This sequence belongs to the Nanog homeobox family.

The protein resides in the nucleus. May act as a transcription regulator. When overexpressed, promotes entry of cells into S phase and cell proliferation. The protein is Homeobox protein NANOGP8 (NANOGP8) of Homo sapiens (Human).